Here is a 644-residue protein sequence, read N- to C-terminus: MTSSSCPLLDLILSPADLKKLSISQLPGLAEEIRYRIISVLSQTGGHLSSNLGIVELTIALHYVFSSPKDKFIFDVGHQTYPHKLLTGRNNEGFDHIRNDNGLSGFTNPTESDHDLFFSGHAGTALSLALGMAQTTPLESRTHVIPILGDAAFSCGLTLEALNNISTDLSKFVVILNDNNMSISKNVGAMSRIFSRWLHHPATNKLTKQVEKWLAKIPRYGDSLAKHSRRLSQCVKNLFCPTPLFEQFGLAYVGPIDGHNVKKLIPILQSVRNLPFPILVHVCTTKGKGLDQAQNNPAKYHGVRANFNKRESAKHLPAIKPKPSFPDIFGQTLCELGEVSSRLHVVTPAMSIGSRLEGFKQKFPERFFDVGIAEGHAVTFSAGIAKAGNPVICSIYSTFLHRALDNVFHDVCMQDLPVIFAIDRAGLAYGDGRSHHGIYDMSFLRAMPQMIICQPRSQVVFQQLLYSSLHWSSPSAIRYPNIPAPHGDPLTGDPNFLRSPGNAETLSQGEDVLIIALGTLCFTALSIKHQLLAYGISATVVDPIFIKPFDNDLFSLLLMSHSKVITIEEHSIRGGLASEFNNFVATFNFKVDILNFAIPDTFLSHGSKEALTKSIGLDESSMTNRILTHFNFRSKKQTVGDVRV.

Thiamine diphosphate-binding positions include His-78 and 120–122 (GHA). Asp-150 contributes to the Mg(2+) binding site. Residues 151 to 152 (AA), Asn-179, and Glu-374 contribute to the thiamine diphosphate site. Asn-179 is a binding site for Mg(2+).

The protein belongs to the transketolase family. DXPS subfamily. As to quaternary structure, homodimer. The cofactor is Mg(2+). It depends on thiamine diphosphate as a cofactor.

It catalyses the reaction D-glyceraldehyde 3-phosphate + pyruvate + H(+) = 1-deoxy-D-xylulose 5-phosphate + CO2. The protein operates within metabolic intermediate biosynthesis; 1-deoxy-D-xylulose 5-phosphate biosynthesis; 1-deoxy-D-xylulose 5-phosphate from D-glyceraldehyde 3-phosphate and pyruvate: step 1/1. Catalyzes the acyloin condensation reaction between C atoms 2 and 3 of pyruvate and glyceraldehyde 3-phosphate to yield 1-deoxy-D-xylulose-5-phosphate (DXP). The protein is 1-deoxy-D-xylulose-5-phosphate synthase of Chlamydia pneumoniae (Chlamydophila pneumoniae).